The sequence spans 122 residues: APPPVGDQAGGRKVNCSKYNAKGSQFACSRHLDPVCGTDHRTYSNECMFCMLTQNKRFSVRILQDNNCDIECTQYSDMCTMDYLPLCGSDGNNYSNKCLFCNAVLRSRGALFLAKHGQCESP.

Kazal-like domains follow at residues 10 to 70 and 71 to 121; these read GGRK…NCDI and ECTQ…QCES. 6 cysteine pairs are disulfide-bonded: Cys-16–Cys-50, Cys-28–Cys-47, Cys-36–Cys-68, Cys-72–Cys-101, Cys-79–Cys-98, and Cys-87–Cys-119.

The protein localises to the secreted. Functionally, this inhibitor is composed of two homologous actively inhibiting halves: one which inhibits trypsin, the other which inhibits elastase. The polypeptide is Double-headed protease inhibitor, submandibular gland (Meles meles (Eurasian badger)).